The sequence spans 274 residues: Elongation factor Ts (274 aa).

The tract at residues 79–82 (TDFV) is involved in Mg(2+) ion dislocation from EF-Tu.

Belongs to the EF-Ts family.

The protein resides in the cytoplasm. In terms of biological role, associates with the EF-Tu.GDP complex and induces the exchange of GDP to GTP. It remains bound to the aminoacyl-tRNA.EF-Tu.GTP complex up to the GTP hydrolysis stage on the ribosome. This is Elongation factor Ts from Porphyromonas gingivalis (strain ATCC 33277 / DSM 20709 / CIP 103683 / JCM 12257 / NCTC 11834 / 2561).